The sequence spans 949 residues: Translation initiation factor IF-2 (949 aa).

Disordered stretches follow at residues 50–206 (FTEK…GAAR) and 220–359 (QNAE…TERK). 2 stretches are compositionally biased toward basic and acidic residues: residues 52-84 (EKPK…KVEK) and 104-143 (FKAE…DQGS). Polar residues-rich tracts occupy residues 144–154 (KNRNFNKSQGQ) and 164–180 (GSQQ…SNKP). Residues 187–206 (NAANRNQNNSQQERQVGAAR) show a composition bias toward low complexity. Over residues 224-275 (YMRHKETQLREQEEARRLAERAKEEARLAAQKAAEEKAKEAEKAAKTERFEP) the composition is skewed to basic and acidic residues. The span at 319–336 (KSWNNQNQVRNQRNSNWN) shows a compositional bias: low complexity. The tr-type G domain occupies 450 to 619 (ERAPVVTIMG…LLVAEVEELK (170 aa)). The G1 stretch occupies residues 459-466 (GHVDHGKT). GTP is bound at residue 459–466 (GHVDHGKT). Positions 484 to 488 (GITQH) are G2. Residues 505–508 (DTPG) are G3. GTP is bound by residues 505 to 509 (DTPGH) and 559 to 562 (NKID). The interval 559–562 (NKID) is G4. The tract at residues 595 to 597 (SAK) is G5.

Belongs to the TRAFAC class translation factor GTPase superfamily. Classic translation factor GTPase family. IF-2 subfamily.

Its subcellular location is the cytoplasm. Its function is as follows. One of the essential components for the initiation of protein synthesis. Protects formylmethionyl-tRNA from spontaneous hydrolysis and promotes its binding to the 30S ribosomal subunits. Also involved in the hydrolysis of GTP during the formation of the 70S ribosomal complex. The sequence is that of Translation initiation factor IF-2 from Streptococcus uberis (strain ATCC BAA-854 / 0140J).